A 126-amino-acid polypeptide reads, in one-letter code: Large ribosomal subunit protein bL12 (126 aa).

The protein belongs to the bacterial ribosomal protein bL12 family. In terms of assembly, homodimer. Part of the ribosomal stalk of the 50S ribosomal subunit. Forms a multimeric L10(L12)X complex, where L10 forms an elongated spine to which 2 to 4 L12 dimers bind in a sequential fashion. Binds GTP-bound translation factors.

Functionally, forms part of the ribosomal stalk which helps the ribosome interact with GTP-bound translation factors. Is thus essential for accurate translation. In Beijerinckia indica subsp. indica (strain ATCC 9039 / DSM 1715 / NCIMB 8712), this protein is Large ribosomal subunit protein bL12.